The following is an 859-amino-acid chain: Low-density lipoprotein receptor-related protein 12 (859 aa).

Positions 1–32 (MACRWSTKESPRWRSALLLLFLAGVYGNGALA) are cleaved as a signal peptide. Over 33–492 (EHSENVHISG…ENCPVIVPTR (460 aa)) the chain is Extracellular. Cystine bridges form between cysteine 47–cysteine 76 and cysteine 103–cysteine 122. Residues 47 to 159 (CGETPEQIRA…KGFRLAYFSG (113 aa)) form the CUB 1 domain. N-linked (GlcNAc...) asparagine glycosylation occurs at asparagine 75. N-linked (GlcNAc...) asparagine glycosylation is present at asparagine 146. LDL-receptor class A domains follow at residues 165–201 (NCAC…EICA) and 214–255 (PCAY…IDCD). Disulfide bonds link cysteine 166-cysteine 178, cysteine 173-cysteine 191, cysteine 185-cysteine 200, cysteine 215-cysteine 232, cysteine 222-cysteine 245, cysteine 239-cysteine 254, and cysteine 259-cysteine 285. A CUB 2 domain is found at 259–372 (CGQWLKYFYG…RGFNATYQVD (114 aa)). 2 N-linked (GlcNAc...) asparagine glycosylation sites follow: asparagine 284 and asparagine 366. LDL-receptor class A domains follow at residues 374–411 (FCLP…TNCT), 412–449 (MCQK…KNCF), and 450–486 (FCQP…ENCP). 9 disulfides stabilise this stretch: cysteine 375-cysteine 388, cysteine 382-cysteine 401, cysteine 395-cysteine 410, cysteine 413-cysteine 426, cysteine 420-cysteine 439, cysteine 433-cysteine 448, cysteine 451-cysteine 463, cysteine 458-cysteine 476, and cysteine 470-cysteine 485. A glycan (N-linked (GlcNAc...) asparagine) is linked at asparagine 409. An N-linked (GlcNAc...) asparagine glycan is attached at asparagine 441. Residues 493-513 (VITAAVIGSLICGLLLVIALG) form a helical membrane-spanning segment. Topologically, residues 514–859 (CTCKLYSLRM…TSDDEALLLC (346 aa)) are cytoplasmic. Disordered stretches follow at residues 623-678 (ADGD…LPQK), 693-723 (ASSS…SPAR), 748-770 (SSLS…REDD), and 801-823 (DQGQ…SNRD). Composition is skewed to polar residues over residues 748–757 (SSLSQNQSPL) and 801–814 (DQGQ…NATN).

It belongs to the LDLR family. In terms of assembly, may interact with RACK1, ZFYVE9 and NMRK2. In terms of tissue distribution, widely expressed in heart, skeletal muscle, brain, lung, placenta and pancreas, but not in tissues consisting of a large number of epithelial cells, such as liver and kidney. Expressed at very low levels in a number of tumor-derived cell lines.

The protein localises to the membrane. It is found in the coated pit. Functionally, probable receptor, which may be involved in the internalization of lipophilic molecules and/or signal transduction. May act as a tumor suppressor. This chain is Low-density lipoprotein receptor-related protein 12 (LRP12), found in Homo sapiens (Human).